Reading from the N-terminus, the 180-residue chain is Large ribosomal subunit protein uL6 (180 aa).

It belongs to the universal ribosomal protein uL6 family. As to quaternary structure, part of the 50S ribosomal subunit.

This protein binds to the 23S rRNA, and is important in its secondary structure. It is located near the subunit interface in the base of the L7/L12 stalk, and near the tRNA binding site of the peptidyltransferase center. The sequence is that of Large ribosomal subunit protein uL6 from Thermodesulfovibrio yellowstonii (strain ATCC 51303 / DSM 11347 / YP87).